Reading from the N-terminus, the 141-residue chain is Hemoglobin subunit alpha (141 aa).

Positions 1 to 141 (VLSGTDKTNV…VGLVLTAKYR (141 aa)) constitute a Globin domain. H58 is an O2 binding site. A heme b-binding site is contributed by H87.

It belongs to the globin family. Heterotetramer of two alpha chains and two beta chains. Red blood cells.

Functionally, involved in oxygen transport from the lung to the various peripheral tissues. The protein is Hemoglobin subunit alpha (HBA) of Psittacula krameri (Rose-ringed parakeet).